Consider the following 339-residue polypeptide: DNA-directed RNA polymerase subunit alpha (339 aa).

Residues 1-235 (MVREEVAVST…DLFIPFLHGE (235 aa)) are alpha N-terminal domain (alpha-NTD). The tract at residues 267–339 (KAIALECIFI…FTIDLPKNKF (73 aa)) is alpha C-terminal domain (alpha-CTD).

The protein belongs to the RNA polymerase alpha chain family. In terms of assembly, in plastids the minimal PEP RNA polymerase catalytic core is composed of four subunits: alpha, beta, beta', and beta''. When a (nuclear-encoded) sigma factor is associated with the core the holoenzyme is formed, which can initiate transcription.

The protein resides in the plastid. It localises to the chloroplast. The catalysed reaction is RNA(n) + a ribonucleoside 5'-triphosphate = RNA(n+1) + diphosphate. Its function is as follows. DNA-dependent RNA polymerase catalyzes the transcription of DNA into RNA using the four ribonucleoside triphosphates as substrates. The chain is DNA-directed RNA polymerase subunit alpha from Drimys granadensis.